A 372-amino-acid polypeptide reads, in one-letter code: MDPLGAAKTQWPWRRCLAALLFQLLVAVCFFSYLRVSRDDATGSPRPGLMAVEPVTGAPGGSSRQDTTPTRHTLLILLWTWPFHIPVALSRCSEMAPGTADCHITADRKVYPQADAVIVHHWDIMSNPKSRLPPSPRPQGQRWIWFSLEPPPNCQHLEALDGYFNLTMSYRSDSDIFTPYGWLEPWSGQPAHPPLNLSAKTELVAWAVSNWKPDSARVHYYQSLQAHLKVDVYGRSHKPLPKGTMMETLSRYKFYLAFENSLHPDYITEKLWRNALEAWAVPVVLGPSRSNYERFLPPDPFIHVDDFQSPKDLARYLQELDKDHARYLSYFRWRETLQPRSFSWALDFCKACWKLQQESRYQMVRSIAAWFT.

The Cytoplasmic segment spans residues 1–15 (MDPLGAAKTQWPWRR). A helical; Signal-anchor for type II membrane protein membrane pass occupies residues 16–34 (CLAALLFQLLVAVCFFSYL). Topologically, residues 35-372 (RVSRDDATGS…MVRSIAAWFT (338 aa)) are lumenal. The interval 40–68 (DATGSPRPGLMAVEPVTGAPGGSSRQDTT) is disordered. Asn165 and Asn196 each carry an N-linked (GlcNAc...) asparagine glycan.

This sequence belongs to the glycosyltransferase 10 family. Glycosylated.

It localises to the golgi apparatus. It is found in the golgi stack membrane. It carries out the reaction a beta-D-galactosyl-(1-&gt;3)-N-acetyl-beta-D-glucosaminyl derivative + GDP-beta-L-fucose = a beta-D-galactosyl-(1-&gt;3)-[alpha-L-fucosyl-(1-&gt;4)]-N-acetyl-beta-D-glucosaminyl derivative + GDP + H(+). It catalyses the reaction an N-acetyl-alpha-neuraminyl-(2-&gt;3)-beta-D-galactosyl-(1-&gt;4)-N-acetyl-beta-D-glucosaminyl derivative + GDP-beta-L-fucose = an alpha-Neu5Ac-(2-&gt;3)-beta-D-Gal-(1-&gt;4)-[alpha-L-Fuc-(1-&gt;3)]-beta-D-GlcNAc derivative + GDP + H(+). The catalysed reaction is a beta-D-galactosyl-(1-&gt;4)-N-acetyl-beta-D-glucosaminyl derivative + GDP-beta-L-fucose = a beta-D-galactosyl-(1-&gt;4)-[alpha-L-fucosyl-(1-&gt;3)]-N-acetyl-beta-D-glucosaminyl derivative + GDP + H(+). The enzyme catalyses an alpha-Neu5Ac-(2-&gt;3)-beta-D-Gal-(1-&gt;4)-beta-D-GlcNAc-(1-&gt;3)-beta-D-Gal-(1-&gt;4)-[alpha-L-Fuc-(1-&gt;3)]-beta-D-GlcNAc derivative + GDP-beta-L-fucose = an alpha-Neu5Ac-(2-&gt;3)-beta-D-Gal-(1-&gt;4)-[alpha-L-Fuc-(1-&gt;3)]-beta-D-GlcNAc-(1-&gt;3)-beta-D-Gal-(1-&gt;4)-[alpha-L-Fuc-(1-&gt;3)]-beta-D-GlcNAc derivative + GDP + H(+). It carries out the reaction Lc4Cer + GDP-beta-L-fucose = a lactoside III(4)-a-Fuc-Lc4Cer + GDP + H(+). It catalyses the reaction a beta-D-Gal-(1-&gt;3)-beta-D-GlcNAc-(1-&gt;3)-beta-D-Gal-(1-&gt;4)-beta-D-Glc-(1&lt;-&gt;1')-Cer(d18:1(4E)) + GDP-beta-L-fucose = a III(4)-a-Fuc-Lc4Cer(d18:1(4E)) + GDP + H(+). The catalysed reaction is N-acetyl-alpha-neuraminosyl-(2-&gt;3)-beta-D-galactosyl-(1-&gt;3)-[N-acetyl-alpha-neuraminosyl-(2-&gt;6)]-N-acetyl-beta-D-glucosaminyl-(1-&gt;3)-beta-D-galactosyl-(1-&gt;4)-beta-D-glucosyl-(1&lt;-&gt;1')-N-acyl-sphing-4-enine + GDP-beta-L-fucose = N-acetyl-alpha-neuraminosyl-(2-&gt;3)-beta-D-galactosyl-(1-&gt;3)-alpha-L-fucosyl-(1-&gt;4)-[N-acetyl-alpha-neuraminosyl-(2-&gt;6)-N-acetyl-beta-D-glucosaminyl-(1-&gt;3)]-beta-D-galactosyl-(1-&gt;4)-beta-D-glucosyl-(1&lt;-&gt;1')-N-acyl-sphing-4-enine + GDP + H(+). The enzyme catalyses N-acetyl-alpha-neuraminosyl-(2-&gt;3)-beta-D-galactosyl-(1-&gt;3)-N-acetyl-beta-D-glucosaminyl-(1-&gt;3)-beta-D-galactosyl-(1-&gt;4)-beta-D-glucosyl-(1&lt;-&gt;1')-N-acyl-sphing-4-enine + GDP-beta-L-fucose = N-acetyl-alpha-neuraminosyl-(2-&gt;3)-beta-D-galactosyl-(1-&gt;3)-alpha-L-fucosyl-(1-&gt;4)-[N-acetyl-beta-D-glucosaminyl-(1-&gt;3)]-beta-D-galactosyl-(1-&gt;4)-beta-D-glucosyl-(1&lt;-&gt;1')-N-acyl-sphing-4-enine + GDP + H(+). It carries out the reaction beta-D-galactosyl-(1-&gt;3)-N-acetyl-D-glucosamine + GDP-beta-L-fucose = beta-D-galactosyl-(1-&gt;3)-[alpha-L-fucosyl-(1-&gt;4)]-N-acetyl-D-glucosamine + GDP + H(+). It catalyses the reaction alpha-L-Fuc-(1-&gt;2)-beta-D-Gal-(1-&gt;3)-D-GlcNAc + GDP-beta-L-fucose = alpha-L-Fuc-(1-&gt;2)-beta-D-Gal-(1-&gt;3)-[alpha-L-Fuc-(1-&gt;4)]-D-GlcNAc + GDP + H(+). The catalysed reaction is alpha-L-Fuc-(1-&gt;2)-beta-D-Gal-(1-&gt;4)-D-GlcNAc + GDP-beta-L-fucose = alpha-L-Fuc-(1-&gt;2)-beta-D-Gal-(1-&gt;4)-[alpha-L-Fuc-(1-&gt;3)]-D-GlcNAc + GDP + H(+). The enzyme catalyses beta-D-galactosyl-(1-&gt;4)-N-acetyl-D-glucosamine + GDP-beta-L-fucose = beta-D-galactosyl-(1-&gt;4)-[alpha-L-fucosyl-(1-&gt;3)]-N-acetyl-D-glucosamine + GDP + H(+). It carries out the reaction lactose + GDP-beta-L-fucose = beta-D-galactosyl-(1-&gt;4)-[alpha-L-fucosyl-(1-&gt;3)]-D-glucose + GDP + H(+). It catalyses the reaction an alpha-Neu5Ac-(2-&gt;3)-beta-D-Gal-(1-&gt;3)-D-GlcNAc derivative + GDP-beta-L-fucose = an alpha-Neu5Ac-(2-&gt;3)-beta-D-Gal-(1-&gt;3)-[alpha-L-Fuc-(1-&gt;4)]-beta-D-GlcNAc derivative + GDP + H(+). It functions in the pathway protein modification; protein glycosylation. Its function is as follows. Catalyzes the transfer of L-fucose, from a guanosine diphosphate-beta-L-fucose, to both the subterminal N-acetyl glucosamine (GlcNAc) of type 1 chain (beta-D-Gal-(1-&gt;3)-beta-D-GlcNAc) glycolipids and oligosaccharides via an alpha(1,4) linkage, and the subterminal glucose (Glc) or GlcNAc of type 2 chain (beta-D-Gal-(1-&gt;4)-beta-D-GlcNAc) oligosaccharides via an alpha(1,3) linkage, independently of the presence of terminal alpha-L-fucosyl-(1,2) moieties on the terminal galactose of these acceptors and participates in the blood groups Lewis determination and expression of Lewis a (Le(a)), lewis b (Le(b)), Lewis x/SSEA-1 (Le(x)) and lewis y (Le(y)) antigens. Also catalyzes the transfer of L-fucose to subterminal GlcNAc of sialyl- and disialyl-lactotetraosylceramide to produce sialyl Lewis a (sLe(a)) and disialyl Lewis a via an alpha(1,4) linkage and therefore may regulate cell surface sialyl Lewis a expression and consequently regulates adhesive properties to E-selectin, cell proliferation and migration. Catalyzes the transfer of an L-fucose to 3'-sialyl-N-acetyllactosamine by an alpha(1,3) linkage, which allows the formation of sialyl-Lewis x structure and therefore may regulate the sialyl-Lewis x surface antigen expression and consequently adhesive properties to E-selectin. Prefers type 1 chain over type 2 acceptors. Type 1 tetrasaccharide is a better acceptor than type 1 disaccharide suggesting that a beta anomeric configuration of GlcNAc in the substrate is preferred. Lewis-positive (Le(+)) individuals have an active enzyme while Lewis-negative (Le(-)) individuals have an inactive enzyme. This Pongo pygmaeus (Bornean orangutan) protein is 3-galactosyl-N-acetylglucosaminide 4-alpha-L-fucosyltransferase FUT3.